The chain runs to 195 residues: Capsid protein (195 aa).

A disordered region spans residues 148–195 (NAPILSTLPETTVVRRRGRSPRRRTPSPRRRRSQSPRRRRSASPASQC). A compositionally biased stretch (basic residues) spans 161-188 (VRRRGRSPRRRTPSPRRRRSQSPRRRRS). Phosphoserine; by host occurs at positions 167, 174, and 182. The 1; half-length repeat unit spans residues 167–172 (SPRRRT). Residues 167–188 (SPRRRTPSPRRRRSQSPRRRRS) form a 3 X 7 AA repeats of S-P-R-R-R-[PR]-S region. A Bipartite nuclear localization signal motif is present at residues 170 to 187 (RRTPSPRRRRSQSPRRRR). 2 consecutive repeat copies span residues 174–180 (SPRRRRS) and 182–188 (SPRRRRS). The tract at residues 189-195 (ASPASQC) is RNA binding.

The protein belongs to the orthohepadnavirus core antigen family. Homodimerizes, then multimerizes. Interacts with cytosol exposed regions of viral L glycoprotein present in the reticulum-to-Golgi compartment. Interacts with human FLNB. Phosphorylated form interacts with host importin alpha; this interaction depends on the exposure of the NLS, which itself depends upon genome maturation and/or phosphorylation of the capsid protein. Interacts with host NUP153. Phosphorylated by host SRPK1, SRPK2, and maybe protein kinase C or GAPDH. Phosphorylation is critical for pregenomic RNA packaging. Protein kinase C phosphorylation is stimulated by HBx protein and may play a role in transport of the viral genome to the nucleus at the late step during the viral replication cycle.

It localises to the virion. The protein localises to the host cytoplasm. Functionally, self assembles to form an icosahedral capsid. Most capsids appear to be large particles with an icosahedral symmetry of T=4 and consist of 240 copies of capsid protein, though a fraction forms smaller T=3 particles consisting of 180 capsid proteins. Entering capsids are transported along microtubules to the nucleus. Phosphorylation of the capsid is thought to induce exposure of nuclear localization signal in the C-terminal portion of the capsid protein that allows binding to the nuclear pore complex via the importin (karyopherin-) alpha and beta. Capsids are imported in intact form through the nuclear pore into the nuclear basket, where it probably binds NUP153. Only capsids that contain the mature viral genome can release the viral DNA and capsid protein into the nucleoplasm. Immature capsids get stuck in the basket. Capsids encapsulate the pre-genomic RNA and the P protein. Pre-genomic RNA is reverse-transcribed into DNA while the capsid is still in the cytoplasm. The capsid can then either be directed to the nucleus, providing more genomes for transcription, or bud through the endoplasmic reticulum to provide new virions. The polypeptide is Capsid protein (Hepatitis B virus genotype G (isolate IG29227/2000) (HBV-G)).